Consider the following 215-residue polypeptide: 3-isopropylmalate dehydratase small subunit (215 aa).

Belongs to the LeuD family. LeuD type 1 subfamily. In terms of assembly, heterodimer of LeuC and LeuD.

It catalyses the reaction (2R,3S)-3-isopropylmalate = (2S)-2-isopropylmalate. It participates in amino-acid biosynthesis; L-leucine biosynthesis; L-leucine from 3-methyl-2-oxobutanoate: step 2/4. Functionally, catalyzes the isomerization between 2-isopropylmalate and 3-isopropylmalate, via the formation of 2-isopropylmaleate. This chain is 3-isopropylmalate dehydratase small subunit, found in Marinobacter nauticus (strain ATCC 700491 / DSM 11845 / VT8) (Marinobacter aquaeolei).